A 255-amino-acid polypeptide reads, in one-letter code: MAELRALVAVKRVIDFAVKIRVKPDKTGVVTDGVKHSMNPFCEIAVEEAVRLKEKKLVKEIIAVSCGPAQCQETIRTALAMGADRGIHVEVPAAEANHLGPLQVARVLAKLAEKEKVDLVLLGKQAIDDDCNQTGQMTAGFLDWPQGTFASQVTLEGDKIKVEREIDGGLETLRLKLPAVVTADLRLNEPRYATLPNIMKAKKKKIEVIKAGDLGVDLTSKLSVISVEDPPQRTAGVKVETTEDLVAKLKEIGRI.

Residue Ala-2 is modified to N-acetylalanine. Residues Ala-9, 39 to 42 (NPFC), Cys-66, and 123 to 134 (GKQAIDDDCNQT) contribute to the AMP site. A recognition loop region spans residues 183–205 (ADLRLNEPRYATLPNIMKAKKKK). Lys-200 bears the N6,N6,N6-trimethyllysine; by ETFBKMT; alternate mark. Lys-200 bears the N6-acetyllysine; alternate mark. At Lys-200 the chain carries N6-methyllysine; alternate. Lys-203 carries the N6,N6,N6-trimethyllysine; by ETFBKMT modification. N6-acetyllysine; alternate is present on Lys-210. Lys-210 is modified (N6-succinyllysine; alternate). Ser-223 and Ser-226 each carry phosphoserine. N6-acetyllysine is present on Lys-238. An N6-acetyllysine; alternate modification is found at Lys-248. Lys-248 is subject to N6-succinyllysine; alternate.

The protein belongs to the ETF beta-subunit/FixA family. As to quaternary structure, heterodimer composed of ETFA and ETFB. Identified in a complex that contains ETFA, ETFB and ETFRF1. Interacts with ACADM. Post-translationally, methylated. Trimethylation at Lys-200 and Lys-203 may negatively regulate the activity in electron transfer from acyl-CoA dehydrogenases.

Its subcellular location is the mitochondrion matrix. In terms of biological role, heterodimeric electron transfer flavoprotein that accepts electrons from several mitochondrial dehydrogenases, including acyl-CoA dehydrogenases, glutaryl-CoA and sarcosine dehydrogenase. It transfers the electrons to the main mitochondrial respiratory chain via ETF-ubiquinone oxidoreductase. Required for normal mitochondrial fatty acid oxidation and normal amino acid metabolism. ETFB binds an AMP molecule that probably has a purely structural role. This is Electron transfer flavoprotein subunit beta from Bos taurus (Bovine).